The chain runs to 1196 residues: uncharacterized protein (1196 aa).

Residues 27–47 (ILLLLGSFILLNVWINVVTLL) traverse the membrane as a helical segment. Disordered regions lie at residues 150 to 345 (GGGE…PQAH), 367 to 402 (SSVPVPTSAPAPPGTLAPATTPVLAPTPAPVPASAP), 669 to 762 (TQDS…QKNT), 775 to 806 (CLTQSPGLHKKTPFTQTSDLQRSSGFTQDSGI), 826 to 877 (QATD…QDSE), 960 to 1009 (YRSS…GPYK), and 1168 to 1196 (KCEALSPRRLHQEAPSNSGKPSRSGDIRM). The span at 157–177 (VTASKAQASLLSRPETSSQFP) shows a compositional bias: polar residues. 2 stretches are compositionally biased toward low complexity: residues 212-227 (HSPTHTPVCTPTHPWT) and 253-279 (THSQAQDTSAQAQAHTSAPTPAQTPAH). The segment covering 299–321 (HTSAQAQTHSPPHTPEYTHSQAH) has biased composition (polar residues). Pro residues predominate over residues 391–402 (APTPAPVPASAP). 4 stretches are compositionally biased toward polar residues: residues 733–742 (YLCQNPSPSQ), 750–762 (SGITQDSHPQKNT), 787–804 (PFTQTSDLQRSSGFTQDS), and 826–849 (QATDHQKNLGSSKDSGGHKNTGNV). Residues 962–971 (SSEHSQDSNL) show a composition bias toward basic and acidic residues.

Its subcellular location is the membrane. This is an uncharacterized protein from Homo sapiens (Human).